The following is a 156-amino-acid chain: Ribosomal RNA large subunit methyltransferase H (156 aa).

S-adenosyl-L-methionine-binding positions include leucine 73, glycine 104, and 123–128 (LSALTL).

Belongs to the RNA methyltransferase RlmH family. Homodimer.

Its subcellular location is the cytoplasm. It catalyses the reaction pseudouridine(1915) in 23S rRNA + S-adenosyl-L-methionine = N(3)-methylpseudouridine(1915) in 23S rRNA + S-adenosyl-L-homocysteine + H(+). Functionally, specifically methylates the pseudouridine at position 1915 (m3Psi1915) in 23S rRNA. In Shewanella sp. (strain ANA-3), this protein is Ribosomal RNA large subunit methyltransferase H.